Reading from the N-terminus, the 253-residue chain is Uroplakin-3b-like protein 1 (253 aa).

An N-terminal signal peptide occupies residues 1-26 (MGLGRGQSPLLMALLLLLACLQMGMS). The Extracellular portion of the chain corresponds to 27–194 (LERISYVPQL…PGPQTAGTVV (168 aa)). 2 N-linked (GlcNAc...) asparagine glycosylation sites follow: Asn-78 and Asn-130. A helical membrane pass occupies residues 195 to 215 (IIAILSVLLAVLLAALLALLI). The Cytoplasmic portion of the chain corresponds to 216–253 (FTWYDTCGSTPISGPGELVFVRKYDTHHMSRPSTVGGS).

The protein belongs to the uroplakin-3 family.

It localises to the membrane. In Bos taurus (Bovine), this protein is Uroplakin-3b-like protein 1.